The chain runs to 104 residues: Large ribosomal subunit protein bL21 (104 aa).

Belongs to the bacterial ribosomal protein bL21 family. Part of the 50S ribosomal subunit. Contacts protein L20.

In terms of biological role, this protein binds to 23S rRNA in the presence of protein L20. The protein is Large ribosomal subunit protein bL21 of Leptospira borgpetersenii serovar Hardjo-bovis (strain JB197).